Consider the following 446-residue polypeptide: Exodeoxyribonuclease 7 large subunit (446 aa).

This sequence belongs to the XseA family. As to quaternary structure, heterooligomer composed of large and small subunits.

It is found in the cytoplasm. The enzyme catalyses Exonucleolytic cleavage in either 5'- to 3'- or 3'- to 5'-direction to yield nucleoside 5'-phosphates.. Functionally, bidirectionally degrades single-stranded DNA into large acid-insoluble oligonucleotides, which are then degraded further into small acid-soluble oligonucleotides. This is Exodeoxyribonuclease 7 large subunit from Streptococcus agalactiae serotype III (strain NEM316).